The sequence spans 238 residues: MTSREDLVYLSKLAEQSERYEEMVQYMKQVAEMGTELSVEERNLISVAYKNVVGSRRASWRIISSLEQKEQAKGNTQRVELIKTYRAKIEQELSQKCDDVLKIITEFLLKNSTSIESKVFFKKMEGDYYRYYAEFTVDEKRKEVADKSLAAYQEATDTAASLVPTHPIRLGLALNFSVFYYEIMNDADKACQLAKEAFDEAIQKLDEVPEESYKDSTLIMQLLRDNLTLWTSDMGDDE.

This sequence belongs to the 14-3-3 family.

Its function is as follows. Probable adapter protein. The polypeptide is 14-3-3 protein 2 (Entamoeba histolytica (strain ATCC 30459 / HM-1:IMSS / ABRM)).